The sequence spans 243 residues: Carboxy-S-adenosyl-L-methionine synthase (243 aa).

S-adenosyl-L-methionine contacts are provided by residues Tyr40, 65 to 67 (GCS), 90 to 91 (DN), 118 to 119 (DI), Asn133, and Arg200.

The protein belongs to the class I-like SAM-binding methyltransferase superfamily. Cx-SAM synthase family. In terms of assembly, homodimer.

The enzyme catalyses prephenate + S-adenosyl-L-methionine = carboxy-S-adenosyl-L-methionine + 3-phenylpyruvate + H2O. In terms of biological role, catalyzes the conversion of S-adenosyl-L-methionine (SAM) to carboxy-S-adenosyl-L-methionine (Cx-SAM). In Shewanella woodyi (strain ATCC 51908 / MS32), this protein is Carboxy-S-adenosyl-L-methionine synthase.